The chain runs to 242 residues: tRNA (guanine-N(1)-)-methyltransferase (242 aa).

S-adenosyl-L-methionine contacts are provided by residues glycine 109 and 129–134; that span reads LGDFVL.

This sequence belongs to the RNA methyltransferase TrmD family. As to quaternary structure, homodimer.

It is found in the cytoplasm. The catalysed reaction is guanosine(37) in tRNA + S-adenosyl-L-methionine = N(1)-methylguanosine(37) in tRNA + S-adenosyl-L-homocysteine + H(+). Its function is as follows. Specifically methylates guanosine-37 in various tRNAs. The polypeptide is tRNA (guanine-N(1)-)-methyltransferase (Exiguobacterium sibiricum (strain DSM 17290 / CCUG 55495 / CIP 109462 / JCM 13490 / 255-15)).